The chain runs to 143 residues: Large ribosomal subunit protein uL11 (143 aa).

The protein belongs to the universal ribosomal protein uL11 family. In terms of assembly, part of the ribosomal stalk of the 50S ribosomal subunit. Interacts with L10 and the large rRNA to form the base of the stalk. L10 forms an elongated spine to which L12 dimers bind in a sequential fashion forming a multimeric L10(L12)X complex. In terms of processing, one or more lysine residues are methylated.

Functionally, forms part of the ribosomal stalk which helps the ribosome interact with GTP-bound translation factors. The polypeptide is Large ribosomal subunit protein uL11 (Phenylobacterium zucineum (strain HLK1)).